The chain runs to 158 residues: Urease accessory protein UreE (158 aa).

It belongs to the UreE family.

The protein localises to the cytoplasm. In terms of biological role, involved in urease metallocenter assembly. Binds nickel. Probably functions as a nickel donor during metallocenter assembly. The chain is Urease accessory protein UreE from Klebsiella pneumoniae (strain 342).